Here is a 767-residue protein sequence, read N- to C-terminus: uncharacterized protein (767 aa).

Disordered stretches follow at residues 171-209, 314-340, and 533-566; these read LPVW…LRTP, ETEA…CQEE, and RDHG…PRGF. 2 stretches are compositionally biased toward basic and acidic residues: residues 322–331 and 552–564; these read PDPRPEKDAK and ETKD…RDPR.

This is an uncharacterized protein from Homo sapiens (Human).